Consider the following 326-residue polypeptide: MDSHAGNTADPRGSRRGVGLQGSGSPRARQLLERLDARPLAARAAADLSALVRKAGATLRLRHKEAISGLDSADIEVADSRLPHATLVEHRPQHQRSDTQGPRMEPLPVIQNKASYASRLPQATGRFSVELVRGPAGFGLTLSGGRNVSGNVPLAVCGLLKDGPAQRCGHLQAGDLVLYINGQSTRGLTHAQAVEWIRTGGPRLCLVLQRPQEMNGSRSKEVGGGHQKTDRIPDPRGGRMMESRGTISPVHHRPKTRTGPGPSPESVATGHVVRAAEHPAEDLEDRIPGSPGPWLVPSEDRLSRALGIRGGGVQLAQEMAAGRRRH.

The interval 1 to 32 (MDSHAGNTADPRGSRRGVGLQGSGSPRARQLL) is disordered. Residues 128-212 (SVELVRGPAG…RLCLVLQRPQ (85 aa)) form the PDZ domain. Residues 214 to 267 (MNGSRSKEVGGGHQKTDRIPDPRGGRMMESRGTISPVHHRPKTRTGPGPSPESV) form a disordered region. Residues 218–242 (RSKEVGGGHQKTDRIPDPRGGRMME) show a composition bias toward basic and acidic residues. A Phosphoserine modification is found at S263.

The polypeptide is PDZ domain-containing protein MAGIX (Magix) (Rattus norvegicus (Rat)).